The primary structure comprises 215 residues: Redox-sensing transcriptional repressor Rex (215 aa).

Residues leucine 18–phenylalanine 57 constitute a DNA-binding region (H-T-H motif). Glycine 92–glycine 97 serves as a coordination point for NAD(+).

This sequence belongs to the transcriptional regulatory Rex family. As to quaternary structure, homodimer.

It is found in the cytoplasm. In terms of biological role, modulates transcription in response to changes in cellular NADH/NAD(+) redox state. In Listeria innocua serovar 6a (strain ATCC BAA-680 / CLIP 11262), this protein is Redox-sensing transcriptional repressor Rex.